Consider the following 544-residue polypeptide: Membrane protein insertase YidC (544 aa).

5 helical membrane passes run 13–33 (LSLF…SNIL), 343–363 (WGLS…PLTF), 409–429 (LGGC…YSLV), 461–481 (LYFV…FTQL), and 506–526 (MPIM…IYWI).

It belongs to the OXA1/ALB3/YidC family. Type 1 subfamily. In terms of assembly, interacts with the Sec translocase complex via SecD. Specifically interacts with transmembrane segments of nascent integral membrane proteins during membrane integration.

Its subcellular location is the cell inner membrane. Its function is as follows. Required for the insertion and/or proper folding and/or complex formation of integral membrane proteins into the membrane. Involved in integration of membrane proteins that insert both dependently and independently of the Sec translocase complex, as well as at least some lipoproteins. Aids folding of multispanning membrane proteins. This Borreliella burgdorferi (strain ZS7) (Borrelia burgdorferi) protein is Membrane protein insertase YidC.